We begin with the raw amino-acid sequence, 158 residues long: UPF0303 protein SCO2848 (158 aa).

It belongs to the UPF0303 family.

In Streptomyces coelicolor (strain ATCC BAA-471 / A3(2) / M145), this protein is UPF0303 protein SCO2848.